We begin with the raw amino-acid sequence, 1916 residues long: MKSPALQPLSMAGLQLMTPASSPMGPFFGLPWQQEAIHDNIYTPRKYQVELLEAALDHNTIVCLNTGSGKTFIAVLLTKELAHQIRGDLNPHAKRTVFLVNSANQVAQQVSAVRTHSDLKVGEYSDLEVNASWTKERWSQEFTKHQVLIMTCYVALTVLKNGYLSLSDINLLVFDECHLAILDHPYREIMKLCESCPSCPRILGLTASILNGKCDPEELEEKIQKLERILRSDAETATDLVVLDRYTSQPCEIVVDCGPFTDRSGLYERLLMELEAALDFINDCNVAVHSKERDSTLISKQILSDCRAVLVVLGPWCADKVAGMMVRELQKYIKHEQEELHRKFLLFTDTLLRKIHALCEEYFSPASLDLKYVTPKVMKLLEILRKYKPYERQQFESVEWYNNRNQDNYVSWSDSEDDDDDEEIEEKEKPETNFPSPFTNILCGIIFVERRYTAVVLNRLIKEAGKQDPELAYISSNFITGHGIGKNQPRSKQMEAEFRKQEEVLRKFRAHETNLLIATSVVEEGVDIPKCNLVVRFDLPTEYRSYVQSKGRARAPISNYVMLADTDKIKSFEEDLKTYKAIEKILRNKCSKSADGAEADVHAGVDDEDAFPPYVLRPDDGGPRVTINTAIGHINRYCARLPSDPFTHLAPKCRTRELPDGTFYSTLYLPINSPLRASIVGPPMDSVRLAERVVALICCEKLHKIGELDEHLMPVGKETVKYEEELDLHDEEETSVPGRPGSTKRRQCYPKAIPECLRESYPKPDQPCYLYVIGMVLTTPLPDELNFRRRKLYPPEDTTRCFGILTAKPIPQIPHFPVYTRSGEVTISIELKKSGFTLSQQMLELITRLHQYIFSHILRLEKPALEFKPTGAESAYCVLPLNVVNDSGTLDIDFKFMEDIEKSEARIGIPSTKYSKETPFVFKLEDYQDAVIIPRYRNFDQPHRFYVADVYTDLTPLSKFPSPEYETFAEYYKTKYNLDLTNLNQPLLDVDHTSSRLNLLTPRHLNQKGKALPLSSAEKRKAKWESLQNKQILVPELCAIHPIPASLWRKAVCLPSILYRLHCLLTAEELRAQTASDAGVGVRSLPVDFRYPNLDFGWKKSIDSKSFISTCNSSLAESDNYCKHSTTVVPEHAAHQGATRPSLENHDQMSVNCKRLPAESPAKLQSEVSTDLTAINGLSYNKNLANGSYDLVNRDFCQGNQLNYFKQEIPVQPTTSYPIQNLYNYENQPKPSNECPLLSNTYLDGNANTSTSDGSPAVSTMPAMMNAVKALKDRMDSEQSPSVGYSSRTLGPNPGLILQALTLSNASDGFNLERLEMLGDSFLKHAITTYLFCTYPDAHEGRLSYMRSKKVSNCNLYRLGKKKGLPSRMVVSIFDPPVNWLPPGYVVNQDKSNSEKWEKDEMTKDCLLANGKLGEACEEEEDLTWRAPKEEAEDEDDFLEYDQEHIQFIDSMLMGSGAFVRKISLSPFSASDSAYEWKMPKKASLGSMPFASGLEDFDYSSWDAMCYLDPSKAVEEDDFVVGFWNPSEENCGVDTGKQSISYDLHTEQCIADKSIADCVEALLGCYLTSCGERAAQLFLCSLGLKVLPVIKRTSREKALDPAQENGSSQQKSLSGSCAAPVGPRSSAGKDLEYGCLKIPPRCMFDHPDAEKTLNHLISGFETFEKKINYRFKNKAYLLQAFTHASYHYNTITDCYQRLEFLGDAILDYLITKHLYEDPRQHSPGVLTDLRSALVNNTIFASLAVKYDYHKYFKAVSPELFHVIDDFVKFQLEKNEMQGMDSELRRSEEDEEKEEDIEVPKAMGDIFESLAGAIYMDSGMSLEVVWQVYYPMMQPLIEKFSANVPRSPVRELLEMEPETAKFSPAERTYDGKVRVTVEVVGKGKFKGVGRSYRIAKSAAARRALRSLKANQPQVPNS.

Positions 51–227 constitute a Helicase ATP-binding domain; the sequence is LLEAALDHNT…ELEEKIQKLE (177 aa). Residue 64–71 coordinates ATP; the sequence is LNTGSGKT. The short motif at 175–178 is the DECH box element; that stretch reads DECH. Positions 256–595 are required for interaction with PRKRA and TARBP2; that stretch reads DCGPFTDRSG…LRNKCSKSAD (340 aa). The interval 409–433 is disordered; the sequence is YVSWSDSEDDDDDEEIEEKEKPETN. Ser413 and Ser415 each carry phosphoserine. A compositionally biased stretch (acidic residues) spans 414–425; sequence DSEDDDDDEEIE. Residues 433–602 form the Helicase C-terminal domain; sequence NFPSPFTNIL…SADGAEADVH (170 aa). One can recognise a Dicer dsRNA-binding fold domain in the interval 630-722; the sequence is AIGHINRYCA…MPVGKETVKY (93 aa). The interval 726 to 745 is disordered; that stretch reads LDLHDEEETSVPGRPGSTKR. Positions 895 to 1042 constitute a PAZ domain; that stretch reads KFMEDIEKSE…LVPELCAIHP (148 aa). Phosphoserine is present on residues Ser1016 and Ser1160. The region spanning 1276–1403 is the RNase III 1 domain; that stretch reads DSEQSPSVGY…SEKWEKDEMT (128 aa). Glu1316, Glu1395, and Glu1398 together coordinate Mg(2+). Residues Ser1456, Ser1464, and Ser1466 each carry the phosphoserine modification. Residues 1598–1626 are disordered; sequence ALDPAQENGSSQQKSLSGSCAAPVGPRSS. Over residues 1604 to 1615 the composition is skewed to polar residues; that stretch reads ENGSSQQKSLSG. The 159-residue stretch at 1660–1818 folds into the RNase III 2 domain; sequence FETFEKKINY…LAGAIYMDSG (159 aa). The Mg(2+) site is built by Glu1699, Asp1804, and Glu1807. The DRBM domain maps to 1843–1908; it reads VPRSPVRELL…ARRALRSLKA (66 aa). Ser1862 is subject to Phosphoserine.

Belongs to the helicase family. Dicer subfamily. As to quaternary structure, component of the RISC loading complex (RLC), or micro-RNA (miRNA) loading complex (miRLC), which is composed of DICER1, AGO2 and TARBP2; DICER1 and TARBP2 are required to process precursor miRNAs (pre-miRNAs) to mature miRNAs and then load them onto AGO2. Note that the trimeric RLC/miRLC is also referred to as RISC. Interacts with DHX9, AGO1, PIWIL1 and PRKRA. Interacts with AGO2, TARBP2, EIF6, MOV10 and RPL7A (60S ribosome subunit); they form a large RNA-induced silencing complex (RISC). Interacts with BCDIN3D. Interacts (via Dicer dsRNA-binding fold domain) with ALOX5 (via PLAT domain); this interaction enhances arachidonate 5-lipoxygenase activity and modifies the miRNA precursor processing activity of DICER1. It depends on Mg(2+) as a cofactor. Requires Mn(2+) as cofactor. As to expression, isoform 1 is expressed in a wide variety of tissues. Isoform 2 is specifically expressed in oocytes during their growth (at protein level).

Its subcellular location is the cytoplasm. It carries out the reaction Endonucleolytic cleavage to 5'-phosphomonoester.. Double-stranded RNA (dsRNA) endoribonuclease playing a central role in short dsRNA-mediated post-transcriptional gene silencing. Cleaves naturally occurring long dsRNAs and short hairpin pre-microRNAs (miRNA) into fragments of twenty-one to twenty-three nucleotides with 3' overhang of two nucleotides, producing respectively short interfering RNAs (siRNA) and mature microRNAs. SiRNAs and miRNAs serve as guide to direct the RNA-induced silencing complex (RISC) to complementary RNAs to degrade them or prevent their translation. Gene silencing mediated by siRNAs, also called RNA interference, controls the elimination of transcripts from mobile and repetitive DNA elements of the genome but also the degradation of exogenous RNA of viral origin for instance. The miRNA pathway on the other side is a mean to specifically regulate the expression of target genes. In terms of biological role, more active than isoform 1 to process long double-stranded RNA into siRNAs. Responsible for the accumulation of endogenous siRNAs observed in mouse oocytes compared to somatic cells and it regulates meiotic spindle organization in female germline. The chain is Endoribonuclease Dicer (Dicer1) from Mus musculus (Mouse).